The sequence spans 189 residues: dCTP deaminase (189 aa).

DCTP is bound by residues 112 to 117 (KSTYAR), 136 to 138 (TLE), Gln157, Tyr171, and Gln181. Glu138 functions as the Proton donor/acceptor in the catalytic mechanism.

The protein belongs to the dCTP deaminase family. Homotrimer.

The catalysed reaction is dCTP + H2O + H(+) = dUTP + NH4(+). The protein operates within pyrimidine metabolism; dUMP biosynthesis; dUMP from dCTP (dUTP route): step 1/2. Catalyzes the deamination of dCTP to dUTP. The sequence is that of dCTP deaminase from Alcanivorax borkumensis (strain ATCC 700651 / DSM 11573 / NCIMB 13689 / SK2).